Reading from the N-terminus, the 160-residue chain is MTKKKAYKPGSATIAMNKRARHDYFIEEEFEAGLSLQGWEVKSLRAGKANISESYILLQNGEAFLFGATFTPLNVASSHVVCDPTRTRKLLLKERELASLFGSANRDGYTIVPLSLYWKNAWAKLKIGVAKGKKEHDKRDDIKTREWKQDKARIMKNANR.

Residues 137-153 are compositionally biased toward basic and acidic residues; sequence DKRDDIKTREWKQDKAR. Residues 137–160 are disordered; it reads DKRDDIKTREWKQDKARIMKNANR.

Belongs to the SmpB family.

It is found in the cytoplasm. In terms of biological role, required for rescue of stalled ribosomes mediated by trans-translation. Binds to transfer-messenger RNA (tmRNA), required for stable association of tmRNA with ribosomes. tmRNA and SmpB together mimic tRNA shape, replacing the anticodon stem-loop with SmpB. tmRNA is encoded by the ssrA gene; the 2 termini fold to resemble tRNA(Ala) and it encodes a 'tag peptide', a short internal open reading frame. During trans-translation Ala-aminoacylated tmRNA acts like a tRNA, entering the A-site of stalled ribosomes, displacing the stalled mRNA. The ribosome then switches to translate the ORF on the tmRNA; the nascent peptide is terminated with the 'tag peptide' encoded by the tmRNA and targeted for degradation. The ribosome is freed to recommence translation, which seems to be the essential function of trans-translation. The polypeptide is SsrA-binding protein (Edwardsiella ictaluri (strain 93-146)).